The chain runs to 255 residues: 4-hydroxy-tetrahydrodipicolinate reductase (255 aa).

Residues 9 to 14, 89 to 91, and 115 to 118 contribute to the NAD(+) site; these read GFKGRM, GTT, and APNF. His145 acts as the Proton donor/acceptor in catalysis. His146 provides a ligand contact to (S)-2,3,4,5-tetrahydrodipicolinate. Residue Lys149 is the Proton donor of the active site. 155-156 provides a ligand contact to (S)-2,3,4,5-tetrahydrodipicolinate; sequence GT.

It belongs to the DapB family.

The protein localises to the cytoplasm. It catalyses the reaction (S)-2,3,4,5-tetrahydrodipicolinate + NAD(+) + H2O = (2S,4S)-4-hydroxy-2,3,4,5-tetrahydrodipicolinate + NADH + H(+). The catalysed reaction is (S)-2,3,4,5-tetrahydrodipicolinate + NADP(+) + H2O = (2S,4S)-4-hydroxy-2,3,4,5-tetrahydrodipicolinate + NADPH + H(+). Its pathway is amino-acid biosynthesis; L-lysine biosynthesis via DAP pathway; (S)-tetrahydrodipicolinate from L-aspartate: step 4/4. In terms of biological role, catalyzes the conversion of 4-hydroxy-tetrahydrodipicolinate (HTPA) to tetrahydrodipicolinate. This chain is 4-hydroxy-tetrahydrodipicolinate reductase, found in Streptococcus mutans serotype c (strain ATCC 700610 / UA159).